The following is a 266-amino-acid chain: L-aspartate dehydrogenase (266 aa).

Residues A123 and N189 each contribute to the NAD(+) site. H219 is a catalytic residue.

This sequence belongs to the L-aspartate dehydrogenase family.

The enzyme catalyses L-aspartate + NADP(+) + H2O = oxaloacetate + NH4(+) + NADPH + H(+). It catalyses the reaction L-aspartate + NAD(+) + H2O = oxaloacetate + NH4(+) + NADH + H(+). Its pathway is cofactor biosynthesis; NAD(+) biosynthesis; iminoaspartate from L-aspartate (dehydrogenase route): step 1/1. Functionally, specifically catalyzes the NAD or NADP-dependent dehydrogenation of L-aspartate to iminoaspartate. This is L-aspartate dehydrogenase from Cupriavidus taiwanensis (strain DSM 17343 / BCRC 17206 / CCUG 44338 / CIP 107171 / LMG 19424 / R1) (Ralstonia taiwanensis (strain LMG 19424)).